Reading from the N-terminus, the 451-residue chain is Porin AaxA (451 aa).

Residues 1–27 (MASFHSSLLTALCTLCTYGILTMPAYG) form the signal peptide.

The protein belongs to the OprB family.

It is found in the cell outer membrane. Facilitates L-arginine uptake, as part of the AaxABC system. The arginine uptake by the bacterium in the macrophage may be a virulence factor against the host innate immune response. The chain is Porin AaxA (aaxA) from Chlamydia caviae (strain ATCC VR-813 / DSM 19441 / 03DC25 / GPIC) (Chlamydophila caviae).